The primary structure comprises 287 residues: Thymidylate synthase (287 aa).

Arg21 serves as a coordination point for dUMP. (6R)-5,10-methylene-5,6,7,8-tetrahydrofolate is bound at residue Asn51. 150-151 (RR) lines the dUMP pocket. The active-site Nucleophile is Cys170. Residues 190–193 (RSGD), Asn201, and 231–233 (HIY) each bind dUMP. Asp193 is a binding site for (6R)-5,10-methylene-5,6,7,8-tetrahydrofolate. Residue Ala286 participates in (6R)-5,10-methylene-5,6,7,8-tetrahydrofolate binding.

This sequence belongs to the thymidylate synthase family. Bacterial-type ThyA subfamily. As to quaternary structure, homodimer.

It is found in the cytoplasm. It catalyses the reaction dUMP + (6R)-5,10-methylene-5,6,7,8-tetrahydrofolate = 7,8-dihydrofolate + dTMP. It participates in pyrimidine metabolism; dTTP biosynthesis. In terms of biological role, catalyzes the reductive methylation of 2'-deoxyuridine-5'-monophosphate (dUMP) to 2'-deoxythymidine-5'-monophosphate (dTMP) while utilizing 5,10-methylenetetrahydrofolate (mTHF) as the methyl donor and reductant in the reaction, yielding dihydrofolate (DHF) as a by-product. This enzymatic reaction provides an intracellular de novo source of dTMP, an essential precursor for DNA biosynthesis. This is Thymidylate synthase from Mycoplasma genitalium (strain ATCC 33530 / DSM 19775 / NCTC 10195 / G37) (Mycoplasmoides genitalium).